A 462-amino-acid polypeptide reads, in one-letter code: MGGCISKTSWSNEEPMHRPCLGMGCCGSKMGKRGFSDRMVSLHNLVSIPNRIIGNGKSRSSCIFTQQGRKGINQDAMIVWEDFMSKDVTFCGVFDGHGPHGHLVARKVRDSLPVKLLSLLNSIKSKQNGPIGTRASKSDSLEAEKEESTEEDKLNFLWEEAFLKSFNAMDKELRSHPNLECFCSGCTAVTIIKQGSNLYMGNIGDSRAILGSKDSNDSMIAVQLTVDLKPDLPREAERIKQCKGRVFALQDEPEVSRVWLPFDNAPGLAMARAFGDFCLKDYGVISIPEFSHRVLTDRDQFIVLASDGVWDVLSNEEVVEVVASATSRASAARLVVDSAVREWKLKYPTSKMDDCAVVCLFLDGRMDSETSDNEEQCFSSATNAVESDESQGAEPCLQRNVTVRSLSTDQENNSYGKVIAEADNAEKEKTREGEQNWSGLEGVTRVNSLVQLPRFPGEEPKT.

Residues 60–362 form the PPM-type phosphatase domain; that stretch reads SSCIFTQQGR…DDCAVVCLFL (303 aa). Aspartate 95, glycine 96, aspartate 307, and aspartate 353 together coordinate Mn(2+). Disordered regions lie at residues 369–394 and 421–443; these read ETSD…QGAE and EADN…LEGV. A compositionally biased stretch (polar residues) spans 376 to 385; that stretch reads QCFSSATNAV. The span at 424–434 shows a compositional bias: basic and acidic residues; sequence NAEKEKTREGE.

The protein belongs to the PP2C family. Interacts with GCN5. Requires Mg(2+) as cofactor. Mn(2+) is required as a cofactor.

The catalysed reaction is O-phospho-L-seryl-[protein] + H2O = L-seryl-[protein] + phosphate. It catalyses the reaction O-phospho-L-threonyl-[protein] + H2O = L-threonyl-[protein] + phosphate. In terms of biological role, may act as negative regulator of GCN5. The polypeptide is Probable protein phosphatase 2C 1 (PPC6-6) (Arabidopsis thaliana (Mouse-ear cress)).